We begin with the raw amino-acid sequence, 483 residues long: GTPase Obg (483 aa).

One can recognise an Obg domain in the interval 2–159 (SRFIDRVVLH…RDLVLELKSV (158 aa)). Positions 160–340 (ADVGLLGFPS…LTFALAKMVR (181 aa)) constitute an OBG-type G domain. Residues 166-173 (GFPSAGKS), 191-195 (FTTLV), 212-215 (DVPG), 292-295 (NKTD), and 321-323 (SAV) each bind GTP. Mg(2+) is bound by residues serine 173 and threonine 193. An OCT domain is found at 358–438 (PVKVKDSSFT…IGDVSFEWEP (81 aa)).

This sequence belongs to the TRAFAC class OBG-HflX-like GTPase superfamily. OBG GTPase family. In terms of assembly, monomer. Mg(2+) is required as a cofactor.

The protein resides in the cytoplasm. In terms of biological role, an essential GTPase which binds GTP, GDP and possibly (p)ppGpp with moderate affinity, with high nucleotide exchange rates and a fairly low GTP hydrolysis rate. Plays a role in control of the cell cycle, stress response, ribosome biogenesis and in those bacteria that undergo differentiation, in morphogenesis control. In Rhodococcus erythropolis (strain PR4 / NBRC 100887), this protein is GTPase Obg.